Reading from the N-terminus, the 212-residue chain is Large ribosomal subunit protein uL3 (212 aa).

Q153 is modified (N5-methylglutamine).

This sequence belongs to the universal ribosomal protein uL3 family. Part of the 50S ribosomal subunit. Forms a cluster with proteins L14 and L19. In terms of processing, methylated by PrmB.

In terms of biological role, one of the primary rRNA binding proteins, it binds directly near the 3'-end of the 23S rRNA, where it nucleates assembly of the 50S subunit. In Shewanella sediminis (strain HAW-EB3), this protein is Large ribosomal subunit protein uL3.